A 291-amino-acid polypeptide reads, in one-letter code: Phytanoyl-CoA dioxygenase domain-containing protein 1 (291 aa).

A Phosphothreonine modification is found at T55. 2-oxoglutarate contacts are provided by residues K102, M141, 156 to 158 (HQD), and W174. Fe cation-binding residues include H156 and D158. A Fe cation-binding site is contributed by H246. Residues S248 and R257 each contribute to the 2-oxoglutarate site.

This sequence belongs to the PhyH family. PHYHD1 subfamily. It depends on Fe cation as a cofactor.

In terms of biological role, 2-oxoglutarate(2OG)-dependent dioxygenase that catalyzes the conversion of 2-oxoglutarate to succinate and CO(2) in an iron-dependent manner. However, does not couple 2OG turnover to the hydroxylation of acyl-coenzyme A derivatives, implying that it is not directly involved in phytanoyl coenzyme-A metabolism. Does not show detectable activity towards fatty acid CoA thioesters. This is Phytanoyl-CoA dioxygenase domain-containing protein 1 (Phyhd1) from Rattus norvegicus (Rat).